The chain runs to 467 residues: MASSEVARHLLFQSHMATKTTCMSSQGSDDEQRKRENIRSLTMSDHVGFESLPDQLVNRSIQQGFCFNILCVGETGIGKSTLIDTLFNTNFEDYESSHFCPNVKLKAQTYELQESNVQLKLTIVNTVGFGDQINKEESYQPIVDYIDAQFEAYLQEELKIKRSLFTYHDSRIHVCLYFISPTGHSLKTLDLLTMKNLDSKVNIIPVIAKADTVSKTELQKFKIKLMSELVSNGVQIYQFPTDDDTIAKVNAAMNGQLPFAVVGSMDEVKVGNKMVKARQYPWGVVQVENENHCDFVKLREVLICTNMEDLREQTHTRHYELYRRCKLEEMGFTDVGPENKPVSLQETYEAKRHEFHGERQRKEEEMKQMFVQRVKEKEAILKEAERELQAKFEHLKRLHQEERMKLEEKRKLLEEEIIAFSKKKATSEIFHSQSFLATGSNLRKQPQLLIFMEKYFQVQGQYVSQSE.

One can recognise a Septin-type G domain in the interval 63–329; the sequence is QGFCFNILCV…ELYRRCKLEE (267 aa). A G1 motif region spans residues 73 to 80; that stretch reads GETGIGKS. Residues 73–80, glycine 128, 209–217, glycine 263, and arginine 278 contribute to the GTP site; these read GETGIGKS and KADTVSKTE. The segment at 125–128 is G3 motif; it reads NTVG. Residues 208–211 are G4 motif; that stretch reads AKAD.

It belongs to the TRAFAC class TrmE-Era-EngA-EngB-Septin-like GTPase superfamily. Septin GTPase family. Septins polymerize into heterooligomeric protein complexes that form filaments, and can associate with cellular membranes, actin filaments and microtubules. GTPase activity is required for filament formation. Interacts with ADGB. In terms of processing, proteolytically cleaved in vitro in a calmodulin-dependent manner.

The protein localises to the cytoplasm. Its subcellular location is the cytoskeleton. The protein resides in the cell projection. It is found in the cilium. It localises to the flagellum. Functionally, filament-forming cytoskeletal GTPase. May play a role in cytokinesis (Potential). The sequence is that of Septin-10 from Pongo abelii (Sumatran orangutan).